We begin with the raw amino-acid sequence, 353 residues long: uncharacterized protein (353 aa).

Residues 1-30 (MHLRHLFSPRLRGSLLLGSLLVASSFSTLA) form the signal peptide.

This is an uncharacterized protein from Salmonella typhi.